The chain runs to 312 residues: Ribosomal protein L11 methyltransferase (312 aa).

Positions 160, 181, 203, and 246 each coordinate S-adenosyl-L-methionine.

It belongs to the methyltransferase superfamily. PrmA family.

Its subcellular location is the cytoplasm. The catalysed reaction is L-lysyl-[protein] + 3 S-adenosyl-L-methionine = N(6),N(6),N(6)-trimethyl-L-lysyl-[protein] + 3 S-adenosyl-L-homocysteine + 3 H(+). Its function is as follows. Methylates ribosomal protein L11. The polypeptide is Ribosomal protein L11 methyltransferase (Staphylococcus carnosus (strain TM300)).